A 3146-amino-acid chain; its full sequence is Bassianolide nonribosomal cyclodepsipeptide synthetase (3146 aa).

The segment covering M1–L12 has biased composition (polar residues). The tract at residues M1–L23 is disordered. Residues H69–S454 form a condensation 1 region. Positions G495–R887 are adenylation 1. Residues P1015–S1091 form the Carrier 1 domain. An O-(pantetheine 4'-phosphoryl)serine modification is found at S1052. A condensation 2 region spans residues S1109 to T1538. Positions F1567–R1973 are adenylation 2. The S-adenosyl-L-methionine-dependent N-methyltransferase (MT) stretch occupies residues T2041–V2181. 2 consecutive Carrier domains span residues F2514–L2588 and A2614–Q2688. An O-(pantetheine 4'-phosphoryl)serine mark is found at S2548 and S2648. The segment at Q2734–T3138 is condensation 3.

Belongs to the NRP synthetase family.

The enzyme catalyses 4 (R)-2-hydroxy-3-methylbutanoate + 4 L-leucine + 4 S-adenosyl-L-methionine + 8 ATP = bassianolide + 8 AMP + 4 S-adenosyl-L-homocysteine + 8 diphosphate + 8 H(+). In terms of biological role, bassianolide nonribosomal synthetase that mediates the biosynthesis of bassianolide (BSL), a non-ribosomal cyclodepsipeptide that shows insecticidal and cancer cell antiproliferative activity. BSLS first catalyzes the iterative synthesis of an enzyme-bound dipeptidol monomer intermediate from D-2-hydroxyisovalerate and L-leucine before performing the condensation and cyclization of 4 dipeptidol monomers to yield the cyclic tetrameric ester bassianolide. The N-methyltransferase MT domain is responsible for the methylation of the leucine residues of bassianolide. BSLS is flexible with both the amino acid and hydroxyl acid precursors, and produces bassianolide as the major product (containing N-methyl-L-Leu), together with small amounts of beauvericin and its analogs beauvericins A-C (containing N-methyl-L-Phe). In Beauveria bassiana (White muscardine disease fungus), this protein is Bassianolide nonribosomal cyclodepsipeptide synthetase.